The following is a 150-amino-acid chain: Large ribosomal subunit protein bL9 (150 aa).

This sequence belongs to the bacterial ribosomal protein bL9 family.

Its function is as follows. Binds to the 23S rRNA. This Buchnera aphidicola subsp. Schizaphis graminum (strain Sg) protein is Large ribosomal subunit protein bL9.